The sequence spans 235 residues: Large ribosomal subunit protein uL1 (235 aa).

It belongs to the universal ribosomal protein uL1 family. As to quaternary structure, part of the 50S ribosomal subunit.

Functionally, binds directly to 23S rRNA. The L1 stalk is quite mobile in the ribosome, and is involved in E site tRNA release. Protein L1 is also a translational repressor protein, it controls the translation of the L11 operon by binding to its mRNA. The sequence is that of Large ribosomal subunit protein uL1 from Mycolicibacterium smegmatis (strain ATCC 700084 / mc(2)155) (Mycobacterium smegmatis).